Here is a 392-residue protein sequence, read N- to C-terminus: Queuine tRNA-ribosyltransferase (392 aa).

The active-site Proton acceptor is the D92. Residues 92 to 96 (DSGGF), D146, Q188, and G215 contribute to the substrate site. The RNA binding stretch occupies residues 246–252 (GVGSPED). The Nucleophile role is filled by D265. The interval 270–274 (TRLGR) is RNA binding; important for wobble base 34 recognition. Zn(2+)-binding residues include C303, C305, C308, and H334.

Belongs to the queuine tRNA-ribosyltransferase family. In terms of assembly, homodimer. Within each dimer, one monomer is responsible for RNA recognition and catalysis, while the other monomer binds to the replacement base PreQ1. Requires Zn(2+) as cofactor.

The enzyme catalyses 7-aminomethyl-7-carbaguanine + guanosine(34) in tRNA = 7-aminomethyl-7-carbaguanosine(34) in tRNA + guanine. It functions in the pathway tRNA modification; tRNA-queuosine biosynthesis. Its function is as follows. Catalyzes the base-exchange of a guanine (G) residue with the queuine precursor 7-aminomethyl-7-deazaguanine (PreQ1) at position 34 (anticodon wobble position) in tRNAs with GU(N) anticodons (tRNA-Asp, -Asn, -His and -Tyr). Catalysis occurs through a double-displacement mechanism. The nucleophile active site attacks the C1' of nucleotide 34 to detach the guanine base from the RNA, forming a covalent enzyme-RNA intermediate. The proton acceptor active site deprotonates the incoming PreQ1, allowing a nucleophilic attack on the C1' of the ribose to form the product. After dissociation, two additional enzymatic reactions on the tRNA convert PreQ1 to queuine (Q), resulting in the hypermodified nucleoside queuosine (7-(((4,5-cis-dihydroxy-2-cyclopenten-1-yl)amino)methyl)-7-deazaguanosine). This is Queuine tRNA-ribosyltransferase from Herpetosiphon aurantiacus (strain ATCC 23779 / DSM 785 / 114-95).